We begin with the raw amino-acid sequence, 65 residues long: Small ribosomal subunit protein eS27 (65 aa).

The Zn(2+) site is built by cysteine 20, cysteine 23, cysteine 39, and cysteine 42. A C4-type zinc finger spans residues 20 to 42 (CIDCGNEQIVFSHPATPVRCLVC).

This sequence belongs to the eukaryotic ribosomal protein eS27 family. As to quaternary structure, part of the 30S ribosomal subunit. Zn(2+) serves as cofactor.

The chain is Small ribosomal subunit protein eS27 from Thermococcus kodakarensis (strain ATCC BAA-918 / JCM 12380 / KOD1) (Pyrococcus kodakaraensis (strain KOD1)).